The following is a 149-amino-acid chain: D-aminoacyl-tRNA deacylase (149 aa).

The Gly-cisPro motif, important for rejection of L-amino acids motif lies at 137-138 (GP).

It belongs to the DTD family. In terms of assembly, homodimer.

The protein resides in the cytoplasm. It catalyses the reaction glycyl-tRNA(Ala) + H2O = tRNA(Ala) + glycine + H(+). It carries out the reaction a D-aminoacyl-tRNA + H2O = a tRNA + a D-alpha-amino acid + H(+). Its function is as follows. An aminoacyl-tRNA editing enzyme that deacylates mischarged D-aminoacyl-tRNAs. Also deacylates mischarged glycyl-tRNA(Ala), protecting cells against glycine mischarging by AlaRS. Acts via tRNA-based rather than protein-based catalysis; rejects L-amino acids rather than detecting D-amino acids in the active site. By recycling D-aminoacyl-tRNA to D-amino acids and free tRNA molecules, this enzyme counteracts the toxicity associated with the formation of D-aminoacyl-tRNA entities in vivo and helps enforce protein L-homochirality. This chain is D-aminoacyl-tRNA deacylase, found in Geobacter sp. (strain M21).